The chain runs to 111 residues: Phosphoribosyl-AMP cyclohydrolase (111 aa).

D80 is a binding site for Mg(2+). C81 is a Zn(2+) binding site. D82 and D84 together coordinate Mg(2+). Positions 97 and 104 each coordinate Zn(2+).

It belongs to the PRA-CH family. As to quaternary structure, homodimer. It depends on Mg(2+) as a cofactor. Zn(2+) is required as a cofactor.

Its subcellular location is the cytoplasm. The catalysed reaction is 1-(5-phospho-beta-D-ribosyl)-5'-AMP + H2O = 1-(5-phospho-beta-D-ribosyl)-5-[(5-phospho-beta-D-ribosylamino)methylideneamino]imidazole-4-carboxamide. The protein operates within amino-acid biosynthesis; L-histidine biosynthesis; L-histidine from 5-phospho-alpha-D-ribose 1-diphosphate: step 3/9. Functionally, catalyzes the hydrolysis of the adenine ring of phosphoribosyl-AMP. This chain is Phosphoribosyl-AMP cyclohydrolase, found in Mycobacterium marinum (strain ATCC BAA-535 / M).